The sequence spans 419 residues: MAQTITEKIFSQHVGRAVFAGEIIRCNIDMVIGNDITTPISIKAFEDSGATKLANPDGFSIVLDHFIPAKDIASANQARISRDFAKKYSLKNFFDEKDMGIEHALLPEKGLVVPGDVIIGADSHTCTHGALGAFSTGMGSTDLAFAMITGGNWFKVPESIKVNLSGKPSKYTTGKDIILEIIRLIGVDGALYKTLEFTGSTIEHLSIDDRFSMCNMAIEAGAKSGIVAYDETTKAFLADKNLAREPRIHYSDADASYVQILNIDVASLDPVIAYPFLPSNGHSVVQAQKDNIKIDQAFIGSCTNGRLSDLKVAAEILKGKRVHPDVRLIVTPGTQMILREANKLGYIDIIVDAGGVVSNPTCGACLGGYMGILGDNEVAISTTNRNFVGRMGSRSSKVYLANSAVAAISAIKGYITDPR.

[4Fe-4S] cluster-binding residues include cysteine 302, cysteine 362, and cysteine 365.

This sequence belongs to the aconitase/IPM isomerase family. LeuC type 2 subfamily. As to quaternary structure, heterodimer of LeuC and LeuD. It depends on [4Fe-4S] cluster as a cofactor.

The enzyme catalyses (2R,3S)-3-isopropylmalate = (2S)-2-isopropylmalate. It participates in amino-acid biosynthesis; L-leucine biosynthesis; L-leucine from 3-methyl-2-oxobutanoate: step 2/4. In terms of biological role, catalyzes the isomerization between 2-isopropylmalate and 3-isopropylmalate, via the formation of 2-isopropylmaleate. This is 3-isopropylmalate dehydratase large subunit from Sulfurimonas denitrificans (strain ATCC 33889 / DSM 1251) (Thiomicrospira denitrificans (strain ATCC 33889 / DSM 1251)).